The following is a 321-amino-acid chain: Cytochrome f (321 aa).

A signal peptide spans Met-1–Ala-38. Tyr-39, Cys-59, Cys-62, and His-63 together coordinate heme. Residues Val-288–Lys-308 form a helical membrane-spanning segment.

This sequence belongs to the cytochrome f family. In terms of assembly, the 4 large subunits of the cytochrome b6-f complex are cytochrome b6, subunit IV (17 kDa polypeptide, PetD), cytochrome f and the Rieske protein, while the 4 small subunits are PetG, PetL, PetM and PetN. The complex functions as a dimer. It depends on heme as a cofactor.

It localises to the cellular thylakoid membrane. Functionally, component of the cytochrome b6-f complex, which mediates electron transfer between photosystem II (PSII) and photosystem I (PSI), cyclic electron flow around PSI, and state transitions. This Prochlorococcus marinus (strain NATL2A) protein is Cytochrome f.